We begin with the raw amino-acid sequence, 669 residues long: DNA ligase (669 aa).

Residues 34 to 38, 83 to 84, and E114 each bind NAD(+); these read DAEYD and SL. The N6-AMP-lysine intermediate role is filled by K116. The NAD(+) site is built by R137, E171, K287, and K311. Residues C405, C408, C423, and C428 each contribute to the Zn(2+) site. Positions 591-669 constitute a BRCT domain; sequence NVESYFAGKT…EERFLQELNK (79 aa).

Belongs to the NAD-dependent DNA ligase family. LigA subfamily. The cofactor is Mg(2+). Mn(2+) serves as cofactor.

It catalyses the reaction NAD(+) + (deoxyribonucleotide)n-3'-hydroxyl + 5'-phospho-(deoxyribonucleotide)m = (deoxyribonucleotide)n+m + AMP + beta-nicotinamide D-nucleotide.. Functionally, DNA ligase that catalyzes the formation of phosphodiester linkages between 5'-phosphoryl and 3'-hydroxyl groups in double-stranded DNA using NAD as a coenzyme and as the energy source for the reaction. It is essential for DNA replication and repair of damaged DNA. The chain is DNA ligase from Bacillus cereus (strain 03BB102).